The primary structure comprises 148 residues: Single-stranded DNA-binding protein 1-B, mitochondrial (148 aa).

The transit peptide at 1–17 (MFHRPVLQVFRQFARCQ) directs the protein to the mitochondrion. The 113-residue stretch at 30 to 142 (MNKVQLLGRV…IIADNIIFLT (113 aa)) folds into the SSB domain.

Homotetramer.

The protein localises to the mitochondrion. It localises to the mitochondrion matrix. Its subcellular location is the mitochondrion nucleoid. Functionally, binds preferentially and cooperatively to pyrimidine rich single-stranded DNA (ss-DNA). Required to maintain the copy number of mitochondrial DNA (mtDNA) and plays crucial roles during mtDNA replication that stimulate activity of the DNA polymerase at the replication fork. May also function in mtDNA repair. The polypeptide is Single-stranded DNA-binding protein 1-B, mitochondrial (ssbp1-b) (Xenopus laevis (African clawed frog)).